A 256-amino-acid polypeptide reads, in one-letter code: uncharacterized protein (256 aa).

Positions 201-214 (ACKEGVDSSCKEEG) are enriched in basic and acidic residues. Residues 201 to 231 (ACKEGVDSSCKEEGGGCEEEGSGSEEDSDDS) form a disordered region. The segment covering 215 to 231 (GGCEEEGSGSEEDSDDS) has biased composition (acidic residues).

The protein localises to the mitochondrion. This is an uncharacterized protein from Zea mays (Maize).